Consider the following 450-residue polypeptide: Tripartite motif-containing protein 64C (450 aa).

The segment at 15–56 adopts an RING-type zinc-finger fold; sequence CCICVNYFIDPVTTDCVHSFCRPCLCLCSEEGRAPMRCPLCR. The B box-type zinc-finger motif lies at 87 to 128; it reads SSDNICVLHEETKELFCEADKRLLCGPCSESPEHMAHSHSPI. 4 residues coordinate Zn(2+): Cys-92, His-95, Cys-114, and His-120. A coiled-coil region spans residues 191-218; it reads DEEEQRHLQALEREAKELFQQLQDSQVR. One can recognise a B30.2/SPRY domain in the interval 269–450; the sequence is ELTSWCITGV…LRPFFCFGCT (182 aa).

Belongs to the TRIM/RBCC family.

The sequence is that of Tripartite motif-containing protein 64C (TRIM64C) from Homo sapiens (Human).